Here is a 503-residue protein sequence, read N- to C-terminus: Glycerol kinase (503 aa).

T17 serves as a coordination point for ADP. ATP is bound by residues T17, T18, and S19. T17 contributes to the sn-glycerol 3-phosphate binding site. R21 is a binding site for ADP. Residues R87, E88, Y141, and D245 each coordinate sn-glycerol 3-phosphate. The glycerol site is built by R87, E88, Y141, D245, and Q246. Residues T267 and G310 each contribute to the ADP site. T267, G310, Q314, and G411 together coordinate ATP. ADP-binding residues include G411 and N415.

Belongs to the FGGY kinase family.

The catalysed reaction is glycerol + ATP = sn-glycerol 3-phosphate + ADP + H(+). The protein operates within polyol metabolism; glycerol degradation via glycerol kinase pathway; sn-glycerol 3-phosphate from glycerol: step 1/1. With respect to regulation, inhibited by fructose 1,6-bisphosphate (FBP). Its function is as follows. Key enzyme in the regulation of glycerol uptake and metabolism. Catalyzes the phosphorylation of glycerol to yield sn-glycerol 3-phosphate. This is Glycerol kinase from Pseudomonas tolaasii.